Consider the following 927-residue polypeptide: Translation initiation factor IF-2 (927 aa).

The segment at 27 to 338 (LGLPVKSHAS…APKPVTERKF (312 aa)) is disordered. The span at 49-69 (SFSSSKTKAPTNSVQTNQGVK) shows a compositional bias: polar residues. 2 stretches are compositionally biased toward basic and acidic residues: residues 70–86 (TESK…DDKP) and 101–138 (FKAE…DRRH). Residues 146-159 (GNRNDNRQGQQNNR) show a composition bias toward low complexity. 3 stretches are compositionally biased toward basic and acidic residues: residues 160 to 171 (NKNDGRYADHKQ), 202 to 226 (YSRH…EQEL), and 234 to 257 (AQEE…KEIV). Low complexity predominate over residues 300 to 316 (NWNNQNQVRNQRNSNWN). A tr-type G domain is found at 428–597 (ERPPVVTIMG…LLVAEMEELK (170 aa)). Residues 437–444 (GHVDHGKT) are G1. Position 437-444 (437-444 (GHVDHGKT)) interacts with GTP. Residues 462 to 466 (GITQH) are G2. The tract at residues 483–486 (DTPG) is G3. GTP-binding positions include 483–487 (DTPGH) and 537–540 (NKID). A G4 region spans residues 537 to 540 (NKID). The segment at 573–575 (SAK) is G5.

The protein belongs to the TRAFAC class translation factor GTPase superfamily. Classic translation factor GTPase family. IF-2 subfamily.

It localises to the cytoplasm. One of the essential components for the initiation of protein synthesis. Protects formylmethionyl-tRNA from spontaneous hydrolysis and promotes its binding to the 30S ribosomal subunits. Also involved in the hydrolysis of GTP during the formation of the 70S ribosomal complex. The polypeptide is Translation initiation factor IF-2 (Streptococcus agalactiae serotype Ia (strain ATCC 27591 / A909 / CDC SS700)).